The sequence spans 68 residues: MAKGKDVRIPVLLECTACVRNGVNVNKASTGISRYITQKNRHNTPNRLELRKFCPYCYKHTIHGEVKK.

This sequence belongs to the bacterial ribosomal protein bL33 family.

It localises to the plastid. Its subcellular location is the chloroplast. The chain is Large ribosomal subunit protein bL33c from Lactuca sativa (Garden lettuce).